The chain runs to 106 residues: Urease subunit beta (106 aa).

The protein belongs to the urease beta subunit family. In terms of assembly, heterotrimer of UreA (gamma), UreB (beta) and UreC (alpha) subunits. Three heterotrimers associate to form the active enzyme.

The protein localises to the cytoplasm. It carries out the reaction urea + 2 H2O + H(+) = hydrogencarbonate + 2 NH4(+). Its pathway is nitrogen metabolism; urea degradation; CO(2) and NH(3) from urea (urease route): step 1/1. The chain is Urease subunit beta from Prochlorococcus marinus subsp. pastoris (strain CCMP1986 / NIES-2087 / MED4).